A 3681-amino-acid polypeptide reads, in one-letter code: MKLRRRRASEVPSKIKSFINSVTSVPLELIHEPLACFRWEFDKGDFHHWVDLFNYFDTFFEKHVQVRKDLHIEENFEESDPPFPKDAVLQVLRVIRVVLENCTNKHFYSSYEQHLSLLLASTDADVVEACLQTLAAFLKRQIGKYSIRDASLNSKLFSLAQGWGGKEEGLGLTSCAAENSCDQVSLQLGRTLHFEFYPSDESPSELPGGLQVIHVPDVSICAESDLELLNKLVIDHNVPPSLRFALLTRMRFARAFSSLATRQQFTCIRLYAFVVLVQASGDTENVVSFFNGEPEFVNELVTLVSYEDTVPEKIRILCLLSLVALSQDRTRQPTVLTAVTSGGHRGLLSGLMQKAIDSVVCITSKWSLAFAEALLSLVTVLVSSSSGCSAMREAGLIPTLVPLIKDTDPQHLHLVSAAVHILEAFMDYSNPAAALFRDLGGLDDTIFRLKLEVSRTEDDVKEKNCSSDSNGPDTEQLPYSEALISYHRRLLLKALLRAISLGTYAPGNTNLYGSEESLLPECLCIIFRRAKDFGGGVFSLAATVMSDLIHKDPTCFNALDSAGLTSTFLDAISDEVICSAEAITCIPQCLDALCLNNSGLQAVKDRNALRCFVKIFTSPSYLRALTGDTPGSLSSGLDELLRHQSSLRTYGVDMFIEILNSMLIIGSGMEATTSKSADVPTSAAPVPMEIDVDEKSLAVSDEAEPSSDTSPANIELFLPDCVCNVARLFETVLQNAEVCSLFVEKKGIDAVLQLFSLPLMPLSTSLGQSFSVAFKNFSPQHSAGLARIVCSYLREHLKKTKILLVSIEGTQLLKLESAIQTKILRSLSCLEGMLSLSNFLLKGSASVISELSAADADVLKELGITYKQTIWQMALCNDTKEDEKKSVDRGSDNSVSASSSTAERESDEDSSNALAVRYTNPVSIRSSSSQSIWGGDREFLSIVRSGEGIHGRTRHAIARMRGGRTRRHLESFNFDSEIPADLPVTSSSHELKKKSTEVLIAEILNKLNCTLRFFFTALVKGFTSANRRRIDGASLSSASKTLGTALAKVFLEALNFDGYGAAAGHEKSLSVKCRYLGKVVDDITFLSFDTRRRVCFTAMVNSFYVHGTFKELLTTFEATSQLLWTVPFSIPASSTENEKPGERNIWSHSKWLVDTLQNYCRALDYFVNSTYLLSPTSQTQLLVQPASVGLSIGLFPVPREPETFVRNLQSQVLDVILPIWNHPMFPDCNPNFVASVTSLVTHIYSGVVDARENRSGVTRGINQRALPLQLDESIVGMIVEMGFSRSRAEIALRRVGTNSVEMAMDWLFTNPEQPVQEDDELAQALALSLGNSSETPKLEDTEKPVDVPQEEAEPKEPPVDEVIAASVKLFQSDDSMAFPLMDLFVTLCNRNKGEDRPKIVSYLIQQLKLVQLDFSKDTGALTMIPHILALVLSEDDNTREIAAQDGIVTVAIGILTDFNLKSESETEILAPKCISALLLVLSMMLQAQTKLSSEYVEGNQGGSLVPSDSPQDSTAALKDALSSDVAKGESNQALELIFGKSTGYLTMEEGHKALLIACGLIKQHVPAMIMQAVLQLCARLTKSHALAIQFLENGGLSSLFNLPKKCCFPGYDTVASVIVRHLVEDPQTLQIAMETEIRQTLSGKRHIGRVLPRTFLTTMAPVISRDPVVFMKAVASTCQLESSGGRDFVILSKEKEKPKVSGSEHGFSLNEPLGISENKLHDVSGKCSKSHRRVPANFIQVIDQLIDLVLSFPRVKRQEDGETNLISMEVDEPTTKVKGKSKVGEPEKASSSRVGEPEKAEIPEKSEELARVTFILKLLSDIVLMYSHGTSVILRRDTEISQLRGSNLPDDSPGNGGLIYHVIHRLLPISLEKFVGPEEWKEKLSEKASWFLVVLCSRSNEGRKRIINELSRVLSVFASLGRSSSKSVLLPDKRVLAFANLVYSILTKNSSSSSSNFPGCGCSPDVAKSMMDGGTIQCLTSILHVIDLDHPDAPKLVTLILKSLETLTRAANAAEQLKSEVPNEKKNRDSDERHDSHGNSTETEADELNQNNSSLQQVTDAAGNGQEQAQVSSQSAGERGSSQTQAMPQDMRIEGDETILPEPIQMDFMREEIEGDQIEMSFHVENRADDDVDDDMGDEGEDDEGDDEDADLVEDGAGVMSLAGTDVEDPEDTGLGDEYNDDMVDEDDDDFHENRVIEVRWREALDGLDHFQILGRSGGGNGFIDDITAEPFEGVNVDDLFALRRPLGFERRRQTGRSSLDRSGSEVHGFQHPLFSRPSQTGNTASVSASAGSISRHSEAGSYDVAQFYMFDTPVLPFDQVPVDPFSARLAGGGAPPPLTDYSVVGMDSSRRGVGDSRWTDIGHPQPSSLSASIAQLIEEHFISNLRASAPVNTVVERETNTTEIQEQLHPDVPPSVGSETVLGDGNEGGQQSEERELLNNNENVNNPPDVMAESFAQGQANLASPVSQDTGESLQQLEVMQPLPLNSTPNEIDRMEVGEGDGAPIDQVDHEAVHLISTAQGQPDTSSIQNVSVTAIAPPVDDPDSNFQPSVDVDMSSDGAEGNQSVQPSPLDGDNNELSSMEATENVRNDEQVEEGSLDGRAPEVNAIDPTFLEALPEDLRAEVLASQQAQSVQPPTYEPPPVDDIDPEFLAALPPDIQTEVLAQQRAQRMVQQSQGQAVDMDNASIIATLPADLREEVLLTSSEAVLAALPSPLLAEAQMLRDRAMSHYQARSSVFGSSHRLNNRRNGLGYNRLTGMDRGVGVTIGQRAVSSSADGLKVKEIEGDPLVNADALKSLIRLLRLAQPLGKGLLQRLLLNLCAHSFTRANLVQLLLDMIRPEMETSPSELAITNPQRLYGCQSNVVYGRSQLLNGLPPLVFRRVLEVLTYLATNHSAVADMLFYFDSSLLSQLSSRKGKEKVTHVTDSRDLEIPLVVFLKLLNRPQLLQSTSHLGLVMGLLQVVVYTAASRIEGWSPSSGVPEKLENKPVGEEASSETRKDAESELVGEADLSVARRKNCAEIYNIFLQLPQSDLCNLCILLGYEGLSDKIYSLAGEVLKKLAAVDVAHRKFFTKELSELASSLSSSTVRELATLSSKQKMSRSTGSMAGASILRVLQVLSSLTSPIDESNVGTERETEQEEQNIMQRLNVALEPLWHELSQCISMTELQLDHTAAASNINPGDHVLGISPTSSLSPGTQRLLPLIEAFFVLCEKIQTPSMLQQDTNVTAGEVKESSAHGSSSKTSVDSQKKTDGSVTFSKFAEKHRRLLNSFIRQNPSLLEKSLSMMLKAPRLIDFDNKKAYFRSRIRHQHDQHISGPLRISVRRAYVLEDSYNQLRMRSPQDLKGRLNVQFQGEEGIDAGGLTREWYQLLSRVIFDKGALLFTTVGNDATFQPNPNSVYQTEHLSYFKFVGRMVAKALFDGQLLDVYFTRSFYKHILGVKVTYHDIEAVDPDYYKNLKWLLENDVSDILDLTFSMDADEEKHILYEKTEVTDYELKPGGRNIRVTEETKHEYVDLVAGHILTNAIRPQINAFLEGFNELIPRELVSIFNDKELELLISGLPEIDFDDLKANTEYTSYTAGSPVIHWFWEVVKAFSKEDMARFLQFVTGTSKVPLEGFKALQGISGPQRLQIHKAYGAPERLPSAHTCFNQLDLPEYQSKEQLQERLLLAIHEASEGFGFA.

The span at 882–891 (DEKKSVDRGS) shows a compositional bias: basic and acidic residues. The segment at 882 to 912 (DEKKSVDRGSDNSVSASSSTAERESDEDSSN) is disordered. Positions 892–901 (DNSVSASSST) are enriched in low complexity. Residues 1269–1310 (QLDESIVGMIVEMGFSRSRAEIALRRVGTNSVEMAMDWLFTN) enclose the UBA domain. The UIM domain maps to 1316 to 1335 (QEDDELAQALALSLGNSSET). 10 disordered regions span residues 1332-1358 (SSET…KEPP), 1768-1802 (MEVD…KAEI), 2015-2094 (EQLK…MRIE), 2125-2151 (ENRA…EDAD), 2253-2287 (RQTG…TASV), 2401-2435 (NTTE…QSEE), 2483-2505 (PLPL…DGAP), 2537-2606 (IAPP…APEV), 2975-3003 (SPSS…DAES), and 3228-3254 (TAGE…KTDG). Basic and acidic residues-rich tracts occupy residues 1336–1345 (PKLEDTEKPV), 1782–1802 (KVGE…KAEI), and 2017–2037 (LKSE…HDSH). A compositionally biased stretch (polar residues) spans 2038 to 2087 (GNSTETEADELNQNNSSLQQVTDAAGNGQEQAQVSSQSAGERGSSQTQAM). Residues 2130–2151 (DDVDDDMGDEGEDDEGDDEDAD) show a composition bias toward acidic residues. Positions 2253 to 2265 (RQTGRSSLDRSGS) are enriched in basic and acidic residues. Positions 2277-2287 (RPSQTGNTASV) are enriched in polar residues. Residue Ser2598 is modified to Phosphoserine. Basic and acidic residues predominate over residues 2982 to 3002 (EKLENKPVGEEASSETRKDAE). Over residues 3237-3247 (AHGSSSKTSVD) the composition is skewed to polar residues. Residues 3340–3681 (SPQDLKGRLN…HEASEGFGFA (342 aa)) form the HECT domain. The active-site Glycyl thioester intermediate is the Cys3648.

Belongs to the UPL family. TOM1/PTR1 subfamily. As to expression, widely expressed. Expressed in root, stem, cauline and rosette leaf, seedling and flower (at protein level).

The catalysed reaction is S-ubiquitinyl-[E2 ubiquitin-conjugating enzyme]-L-cysteine + [acceptor protein]-L-lysine = [E2 ubiquitin-conjugating enzyme]-L-cysteine + N(6)-ubiquitinyl-[acceptor protein]-L-lysine.. It participates in protein modification; protein ubiquitination. Its function is as follows. Probable E3 ubiquitin-protein ligase which mediates ubiquitination and subsequent proteasomal degradation of target proteins. This Arabidopsis thaliana (Mouse-ear cress) protein is E3 ubiquitin-protein ligase UPL1 (UPL1).